A 411-amino-acid chain; its full sequence is MRGIIKRLNDDGFGILYNKILVPFSAPGDEVEVLKTEKQKRAKIATEWRLLRSSPIRVGARCKVFGKCGGCILQHINYNSQLEFKKEKLRKILGREVEIIPSPRIFGHRNRIDLAVTVNAIGFREKGKWWSVVDVEECPVFGKTSKKAIERLREYIEEEKVSTWKIREDSGFLRYMVLREGKFTGEIMVNFVTKEGELPDPTSYFDFADSIYWSINRSKSDVSYGDIEKYWGKEFIMEELDGVKYLIHPNSFFQTNSYQAVNLVKTVEKFVEGEKVVDMYSGVGTFGVYLAKKGMKVVGFDSNAFAIEMANKNAEINNVEAEFFVASDREVDIKGFDTVIVDPPRAGLHPKLVKRLNDHGPETIVYVSCNPKTFKVNIEQLNNYIIEELIALDMFPHTPHIELVGKLRRLV.

4 residues coordinate [4Fe-4S] cluster: Cys62, Cys68, Cys71, and Cys138. S-adenosyl-L-methionine-binding positions include Gln254, Tyr280, Thr285, 301-302, Asp328, and Asp342; that span reads DS. Cys369 (nucleophile) is an active-site residue. Catalysis depends on Glu402, which acts as the Proton acceptor.

Belongs to the class I-like SAM-binding methyltransferase superfamily. RNA M5U methyltransferase family.

The enzyme catalyses uridine(54) in tRNA + S-adenosyl-L-methionine = 5-methyluridine(54) in tRNA + S-adenosyl-L-homocysteine + H(+). Its function is as follows. Catalyzes the formation of 5-methyl-uridine at position 54 (m5U54) in tRNA. The sequence is that of tRNA (uracil(54)-C(5))-methyltransferase from Pyrococcus furiosus (strain ATCC 43587 / DSM 3638 / JCM 8422 / Vc1).